The chain runs to 115 residues: Large ribosomal subunit protein bL20 (115 aa).

This sequence belongs to the bacterial ribosomal protein bL20 family.

In terms of biological role, binds directly to 23S ribosomal RNA and is necessary for the in vitro assembly process of the 50S ribosomal subunit. It is not involved in the protein synthesizing functions of that subunit. This is Large ribosomal subunit protein bL20 from Mycoplasmoides gallisepticum (strain R(low / passage 15 / clone 2)) (Mycoplasma gallisepticum).